Here is a 207-residue protein sequence, read N- to C-terminus: Myosin light chain 6B (207 aa).

Residues 1–50 (MPPKKDAPVKKPAGPSISKPAAKSTPGTPLAKAKAEPAAPQAPAKSQEPP) are disordered. Residues 36 to 50 (EPAAPQAPAKSQEPP) are compositionally biased toward low complexity. 3 EF-hand domains span residues 63–98 (DQLE…LGQN), 140–175 (GTYE…LGEK), and 175–207 (KMTE…ILSL).

Myosin is a hexamer of 2 heavy chains and 4 light chains.

Regulatory light chain of myosin. Does not bind calcium. In Mus musculus (Mouse), this protein is Myosin light chain 6B.